Here is a 377-residue protein sequence, read N- to C-terminus: Erythronate-4-phosphate dehydrogenase (377 aa).

2 residues coordinate substrate: Ser59 and Thr81. An NAD(+)-binding site is contributed by Asp162. Arg237 is an active-site residue. Asp260 is an NAD(+) binding site. Glu265 is a catalytic residue. Residue His282 is the Proton donor of the active site. Gly285 is an NAD(+) binding site. Tyr286 serves as a coordination point for substrate.

The protein belongs to the D-isomer specific 2-hydroxyacid dehydrogenase family. PdxB subfamily. In terms of assembly, homodimer.

It localises to the cytoplasm. The catalysed reaction is 4-phospho-D-erythronate + NAD(+) = (R)-3-hydroxy-2-oxo-4-phosphooxybutanoate + NADH + H(+). It functions in the pathway cofactor biosynthesis; pyridoxine 5'-phosphate biosynthesis; pyridoxine 5'-phosphate from D-erythrose 4-phosphate: step 2/5. Functionally, catalyzes the oxidation of erythronate-4-phosphate to 3-hydroxy-2-oxo-4-phosphonooxybutanoate. In Psychrobacter arcticus (strain DSM 17307 / VKM B-2377 / 273-4), this protein is Erythronate-4-phosphate dehydrogenase.